Reading from the N-terminus, the 360-residue chain is Probable ribonucleoside-diphosphate reductase small subunit 376L (360 aa).

Fe cation-binding residues include Asp67, Glu98, and His101. Residue Tyr105 is part of the active site. The Fe cation site is built by Glu172, Glu206, and His209.

Belongs to the ribonucleoside diphosphate reductase small chain family. As to quaternary structure, heterotetramer composed of a homodimer of the large subunit (R1) and a homodimer of the small subunit (R2). Larger multisubunit protein complex are also active, composed of (R1)n(R2)n. The cofactor is Fe cation.

It carries out the reaction a 2'-deoxyribonucleoside 5'-diphosphate + [thioredoxin]-disulfide + H2O = a ribonucleoside 5'-diphosphate + [thioredoxin]-dithiol. Its function is as follows. Ribonucleoside-diphosphate reductase holoenzyme provides the precursors necessary for viral DNA synthesis. Allows virus growth in non-dividing cells. Catalyzes the biosynthesis of deoxyribonucleotides from the corresponding ribonucleotides. In Acheta domesticus (House cricket), this protein is Probable ribonucleoside-diphosphate reductase small subunit 376L.